Consider the following 146-residue polypeptide: Thyroid hormone-inducible hepatic protein (146 aa).

Residues 83-104 (KVAGSEENGTAETEEVEDESAS) are disordered. The span at 94–104 (ETEEVEDESAS) shows a compositional bias: acidic residues.

Belongs to the SPOT14 family. As to quaternary structure, homodimer. Heterodimer with MID1IP1. Interacts with THRB and PLAGL1. Mainly expressed in tissues that synthesize triglycerides.

The protein resides in the nucleus. Its subcellular location is the cytoplasm. In terms of biological role, plays a role in the regulation of lipogenesis, especially in lactating mammary gland. Important for the biosynthesis of triglycerides with medium-length fatty acid chains. May modulate lipogenesis by interacting with MID1IP1 and preventing its interaction with ACACA. May function as transcriptional coactivator. May modulate the transcription factor activity of THRB. In Homo sapiens (Human), this protein is Thyroid hormone-inducible hepatic protein (THRSP).